Consider the following 69-residue polypeptide: U2-agatoxin-Ao1o (69 aa).

Positions 1–20 (MKAIISLLLISAMVFSMFEA) are cleaved as a signal peptide. Residues 21–34 (VPVRRRFTAFEGER) constitute a propeptide that is removed on maturation. 3 cysteine pairs are disulfide-bonded: Cys36/Cys52, Cys43/Cys57, and Cys51/Cys67. The residue at position 68 (Leu68) is a Leucine amide.

It belongs to the neurotoxin 01 (U2-agtx) family. As to expression, expressed by the venom gland.

The protein resides in the secreted. In terms of biological role, insect active toxin causing rapid but reversible paralysis in crickets. No activity shown in mammals. Does not show effect on mammalian voltage-gated calcium channels. This Agelena orientalis (Funnel-web spider) protein is U2-agatoxin-Ao1o.